The following is a 181-amino-acid chain: CDP-diacylglycerol--glycerol-3-phosphate 3-phosphatidyltransferase (181 aa).

The next 4 membrane-spanning stretches (helical) occupy residues 8–28 (PNYL…AFYI), 35–55 (KLGA…GYIA), 64–84 (FGKM…IIML), and 148–168 (IIYL…LTII).

Belongs to the CDP-alcohol phosphatidyltransferase class-I family.

Its subcellular location is the cell membrane. The enzyme catalyses a CDP-1,2-diacyl-sn-glycerol + sn-glycerol 3-phosphate = a 1,2-diacyl-sn-glycero-3-phospho-(1'-sn-glycero-3'-phosphate) + CMP + H(+). It functions in the pathway phospholipid metabolism; phosphatidylglycerol biosynthesis; phosphatidylglycerol from CDP-diacylglycerol: step 1/2. In terms of biological role, this protein catalyzes the committed step to the synthesis of the acidic phospholipids. This chain is CDP-diacylglycerol--glycerol-3-phosphate 3-phosphatidyltransferase (pgsA), found in Rickettsia felis (strain ATCC VR-1525 / URRWXCal2) (Rickettsia azadi).